The following is a 389-amino-acid chain: SH2 domain-containing protein 2A (389 aa).

Residues 41 to 63 form a disordered region; sequence AASPQAPEAASNTGNAERAEEVP. The 92-residue stretch at 95–186 folds into the SH2 domain; the sequence is WFHGFITRRE…PYGETLTEPL (92 aa). The interval 190 to 295 is disordered; that stretch reads TPEPAGLSLR…PIAFYAMGRG (106 aa). Positions 203–216 are enriched in polar residues; that stretch reads SNFGSKSQDPNPQY. At Ser217 the chain carries Phosphoserine. 2 short sequence motifs (SH3-binding) span residues 244–250 and 272–278; these read RPKPPIP and RPKPSNP. Residues 245–256 are compositionally biased toward pro residues; that stretch reads PKPPIPAKPQLP. A Phosphoserine modification is found at Ser296. Residues 324–389 form a disordered region; it reads KSWSRPVPGG…QAWLPLGPPQ (66 aa). Residues 337–348 are compositionally biased toward polar residues; sequence GGSQLHSENSVI. Residues 352 to 361 show a composition bias toward pro residues; the sequence is PPLPHQPPPA.

In terms of assembly, interacts with KDR. Interacts with TXK and ITK. Phosphorylated on tyrosine residues. As to expression, expression limited to tissues of the immune system and, in particular, activated T-cells. Expressed in peripheral blood leukocytes, thymus and spleen. Much lower expression or undetectable, in brain, placenta, skeletal muscle, prostate, testis, ovary, small intestine, and colon. Expressed at low levels in unstimulated T-cells, but not expressed in normal resting or activated B-cells. According to PubMed:10692392, expression is not restricted to activated T-cells, but strongly expressed in blood cell lineages, the endothelium and other cell and tissue types, such as heart, lung, and liver.

Its subcellular location is the cytoplasm. Its function is as follows. Could be a T-cell-specific adapter protein involved in the control of T-cell activation. May play a role in the CD4-p56-LCK-dependent signal transduction pathway. Could also play an important role in normal and pathological angiogenesis. Could be an adapter protein that facilitates and regulates interaction of KDR with effector proteins important to endothelial cell survival and proliferation. This is SH2 domain-containing protein 2A (SH2D2A) from Homo sapiens (Human).